We begin with the raw amino-acid sequence, 1235 residues long: DNA polymerase catalytic subunit (1235 aa).

Disordered stretches follow at residues 640–693 (QGRF…AGRH) and 1098–1134 (AAAPGDEPAPPAALPSPAKRPRETPSHADPPGGASKP). A compositionally biased stretch (basic and acidic residues) spans 650–661 (APKRPAAAREDE). The segment covering 662–675 (ERPEEEGEDEDERE) has biased composition (acidic residues). The span at 676-691 (EGGGEREPEGARETAG) shows a compositional bias: basic and acidic residues.

It belongs to the DNA polymerase type-B family. As to quaternary structure, forms a complex with the ssDNA-binding protein UL29, the DNA polymerase processivity factor, and the alkaline exonuclease. Interacts with the putative helicase-primase complex subunit UL8; this interaction may coordinate leading and lagging strand DNA synthesis at the replication fork.

It localises to the host nucleus. It catalyses the reaction DNA(n) + a 2'-deoxyribonucleoside 5'-triphosphate = DNA(n+1) + diphosphate. The enzyme catalyses Endonucleolytic cleavage to 5'-phosphomonoester.. Its function is as follows. Replicates viral genomic DNA. The replication complex is composed of six viral proteins: the DNA polymerase, processivity factor, primase, primase-associated factor, helicase, and ssDNA-binding protein. Additionally, the polymerase contains an intrinsic ribonuclease H (RNase H) activity that specifically degrades RNA/DNA heteroduplexes or duplex DNA substrates in the 5' to 3' direction. Therefore, it can catalyze the excision of the RNA primers that initiate the synthesis of Okazaki fragments at a replication fork during viral DNA replication. The polypeptide is DNA polymerase catalytic subunit (Human herpesvirus 1 (strain KOS) (HHV-1)).